A 182-amino-acid chain; its full sequence is UPF0397 protein BA_2640/GBAA_2640/BAS2460 (182 aa).

5 helical membrane passes run valine 9–isoleucine 29, alanine 40–isoleucine 60, tryptophan 71–isoleucine 91, isoleucine 114–valine 134, and isoleucine 142–leucine 162.

Belongs to the UPF0397 family.

The protein resides in the cell membrane. The chain is UPF0397 protein BA_2640/GBAA_2640/BAS2460 from Bacillus anthracis.